A 246-amino-acid chain; its full sequence is Phycobilisome rod-core linker polypeptide CpcG2 (246 aa).

Residues 11 to 189 (SSQNQRVAGY…YWRDKLENSR (179 aa)) form the PBS-linker domain. Residues 224–246 (DTTRRDRPTVPASINPTASFPLR) form a disordered region. Residues 235–246 (ASINPTASFPLR) show a composition bias toward polar residues.

The protein belongs to the phycobilisome linker protein family. In terms of assembly, the phycobilisome is a hemidiscoidal structure that is composed of two distinct substructures: a core complex and a number of rods radiating from the core.

It is found in the cellular thylakoid membrane. Its function is as follows. Rod-core linker protein required for attachment of phycocyanin to allophycocyanin in cores of phycobilisomes. In terms of biological role, linker polypeptides determine the state of aggregation and the location of the disk-shaped phycobiliprotein units within the phycobilisome and modulate their spectroscopic properties in order to mediate a directed and optimal energy transfer. In Thermosynechococcus vestitus (strain NIES-2133 / IAM M-273 / BP-1), this protein is Phycobilisome rod-core linker polypeptide CpcG2 (cpcG2).